Here is a 348-residue protein sequence, read N- to C-terminus: D-alanine--D-alanine ligase (348 aa).

The ATP-grasp domain occupies 136–344; it reads KSVFKSYNLP…LEKLVANLIE (209 aa). 171–226 serves as a coordination point for ATP; it reads NKIISYPCFIKPANLGSSVGITKAYSKEEFIAGIEFAAKYDERIIVEKSIEGRELE. Residues Asp297, Glu311, and Asn313 each contribute to the Mg(2+) site.

It belongs to the D-alanine--D-alanine ligase family. It depends on Mg(2+) as a cofactor. Requires Mn(2+) as cofactor.

It localises to the cytoplasm. The catalysed reaction is 2 D-alanine + ATP = D-alanyl-D-alanine + ADP + phosphate + H(+). Its pathway is cell wall biogenesis; peptidoglycan biosynthesis. Its function is as follows. Cell wall formation. In Prochlorococcus marinus (strain NATL2A), this protein is D-alanine--D-alanine ligase.